Reading from the N-terminus, the 373-residue chain is Chaperone protein DnaJ (373 aa).

In terms of domain architecture, J spans 5-69 (DYYEVLGVNK…NKRANYDQFG (65 aa)). The CR-type zinc finger occupies 130–212 (GTKKEISIKK…CKGKGTENKT (83 aa)). Zn(2+) contacts are provided by Cys-143, Cys-146, Cys-160, Cys-163, Cys-186, Cys-189, Cys-200, and Cys-203. CXXCXGXG motif repeat units follow at residues 143–150 (CHTCNGDG), 160–167 (CSYCNGAG), 186–193 (CPKCEGSG), and 200–207 (CPTCKGKG).

It belongs to the DnaJ family. In terms of assembly, homodimer. It depends on Zn(2+) as a cofactor.

Its subcellular location is the cytoplasm. In terms of biological role, participates actively in the response to hyperosmotic and heat shock by preventing the aggregation of stress-denatured proteins and by disaggregating proteins, also in an autonomous, DnaK-independent fashion. Unfolded proteins bind initially to DnaJ; upon interaction with the DnaJ-bound protein, DnaK hydrolyzes its bound ATP, resulting in the formation of a stable complex. GrpE releases ADP from DnaK; ATP binding to DnaK triggers the release of the substrate protein, thus completing the reaction cycle. Several rounds of ATP-dependent interactions between DnaJ, DnaK and GrpE are required for fully efficient folding. Also involved, together with DnaK and GrpE, in the DNA replication of plasmids through activation of initiation proteins. This Staphylococcus epidermidis (strain ATCC 12228 / FDA PCI 1200) protein is Chaperone protein DnaJ.